Consider the following 779-residue polypeptide: Beta-galactosidase 15 (779 aa).

A signal peptide spans 1-19; that stretch reads MVSLSFILCCVLVSSCAYA. A glycan (N-linked (GlcNAc...) asparagine) is linked at asparagine 148. Residue glutamate 178 is the Proton donor of the active site. Glutamate 247 (nucleophile) is an active-site residue. Residues asparagine 248, asparagine 345, asparagine 374, asparagine 489, asparagine 495, and asparagine 555 are each glycosylated (N-linked (GlcNAc...) asparagine). The region spanning 694 to 779 is the SUEL-type lectin domain; it reads VYEKNVLELS…AKRLAVEAIC (86 aa).

Belongs to the glycosyl hydrolase 35 family. In terms of tissue distribution, ubiquitous, with higher levels in roots and siliques.

It is found in the secreted. Its subcellular location is the extracellular space. The protein localises to the apoplast. It catalyses the reaction Hydrolysis of terminal non-reducing beta-D-galactose residues in beta-D-galactosides.. In Arabidopsis thaliana (Mouse-ear cress), this protein is Beta-galactosidase 15 (BGAL15).